Reading from the N-terminus, the 252-residue chain is Enolase-phosphatase E1 (252 aa).

Mg(2+) is bound by residues D14 and E16. Residues 143–144 (SS) and K177 contribute to the substrate site. D202 is a Mg(2+) binding site.

Belongs to the HAD-like hydrolase superfamily. MasA/MtnC family. Monomer. It depends on Mg(2+) as a cofactor.

It is found in the cytoplasm. The protein localises to the nucleus. The enzyme catalyses 5-methylsulfanyl-2,3-dioxopentyl phosphate + H2O = 1,2-dihydroxy-5-(methylsulfanyl)pent-1-en-3-one + phosphate. The protein operates within amino-acid biosynthesis; L-methionine biosynthesis via salvage pathway; L-methionine from S-methyl-5-thio-alpha-D-ribose 1-phosphate: step 3/6. It functions in the pathway amino-acid biosynthesis; L-methionine biosynthesis via salvage pathway; L-methionine from S-methyl-5-thio-alpha-D-ribose 1-phosphate: step 4/6. In terms of biological role, bifunctional enzyme that catalyzes the enolization of 2,3-diketo-5-methylthiopentyl-1-phosphate (DK-MTP-1-P) into the intermediate 2-hydroxy-3-keto-5-methylthiopentenyl-1-phosphate (HK-MTPenyl-1-P), which is then dephosphorylated to form the acireductone 1,2-dihydroxy-3-keto-5-methylthiopentene (DHK-MTPene). This is Enolase-phosphatase E1 from Drosophila persimilis (Fruit fly).